A 456-amino-acid polypeptide reads, in one-letter code: MNYLKEDTIAALSTAAGKSAIAVIRLSGENSFQIIGKIFKTHSKPEQQVKHGYITDGIEKKDEVLCTFFKAPHTYTGENLVEIAAHGNPVIINEILNLLYKNGARPAGPGEFTYRAFLNDKMNLAEAEAVCALITSKTEMSAKAALNSLSGEFSSKIKNIRDAVTNLIASMEANLDHPDEDNMFLSRSEKLSRFDSCIKDVQNLLNSYKTGKILQYGIKVVIIGKPNAGKSSLLNAILGKNRAIVTDIAGTTTDTVEETIDCCGIPLIITDTAGIREHSENLIEILGQAKTREAVCKADILIWLFDSSSEPDCNDAKIADFLKKSDLNIPIICVLNKSDLPPLFSSSLLNRENKVKVKISAKTGVGIADLLDEIVKIAGVSESKNDYLMINTRHFILLQNTLESLIRTKQSLSAKDADEIACFEALSAQISLNEILGINVKQDILDTIFSTFCIGK.

(6S)-5-formyl-5,6,7,8-tetrahydrofolate-binding residues include Arg25, Glu82, and Lys121. The TrmE-type G domain occupies 217-379 (GIKVVIIGKP…LLDEIVKIAG (163 aa)). Asn227 is a binding site for K(+). GTP is bound by residues 227–232 (NAGKSS), 246–252 (TDIAGTT), and 271–274 (DTAG). Ser231 is a binding site for Mg(2+). Residues Thr246, Ile248, and Thr251 each contribute to the K(+) site. Mg(2+) is bound at residue Thr252. Lys456 is a binding site for (6S)-5-formyl-5,6,7,8-tetrahydrofolate.

This sequence belongs to the TRAFAC class TrmE-Era-EngA-EngB-Septin-like GTPase superfamily. TrmE GTPase family. As to quaternary structure, homodimer. Heterotetramer of two MnmE and two MnmG subunits. K(+) serves as cofactor.

The protein resides in the cytoplasm. Its function is as follows. Exhibits a very high intrinsic GTPase hydrolysis rate. Involved in the addition of a carboxymethylaminomethyl (cmnm) group at the wobble position (U34) of certain tRNAs, forming tRNA-cmnm(5)s(2)U34. This chain is tRNA modification GTPase MnmE, found in Endomicrobium trichonymphae.